We begin with the raw amino-acid sequence, 117 residues long: uncharacterized protein (117 aa).

It localises to the cytoplasm. It is found in the nucleus. This is an uncharacterized protein from Saccharomyces cerevisiae (strain ATCC 204508 / S288c) (Baker's yeast).